Consider the following 264-residue polypeptide: LIMR family protein SELMODRAFT_416716 (264 aa).

4 helical membrane passes run 23–43, 96–116, 194–214, and 225–245; these read VVILLTVLCLLLGFLYAVIGY, ILFTMFGGVGMATLPLSLIFA, IIWLLHIIVFMLVNPPAFPFL, and WGLLGTTTFAIFCYYLVMSVI.

It belongs to the LIMR family.

It localises to the membrane. The polypeptide is LIMR family protein SELMODRAFT_416716 (Selaginella moellendorffii (Spikemoss)).